The chain runs to 853 residues: DNA mismatch repair protein MutS (853 aa).

An ATP-binding site is contributed by 613–620 (GPNMGGKS).

The protein belongs to the DNA mismatch repair MutS family.

Its function is as follows. This protein is involved in the repair of mismatches in DNA. It is possible that it carries out the mismatch recognition step. This protein has a weak ATPase activity. This is DNA mismatch repair protein MutS from Vibrio parahaemolyticus serotype O3:K6 (strain RIMD 2210633).